A 407-amino-acid chain; its full sequence is Substance-P receptor (407 aa).

At 1–31 the chain is on the extracellular side; it reads MDNVLPVDSDLFPNISTNTSEPNQFVQPAWQ. 2 N-linked (GlcNAc...) asparagine glycosylation sites follow: Asn14 and Asn18. Residues 32 to 54 traverse the membrane as a helical segment; sequence IVLWAAAYTVIVVTSVVGNVVVM. The Cytoplasmic portion of the chain corresponds to 55–64; that stretch reads WIILAHKRMR. The chain crosses the membrane as a helical span at residues 65–86; that stretch reads TVTNYFLVNLAFAEASMAAFNT. The Extracellular portion of the chain corresponds to 87–106; it reads VVNFTYAVHNEWYYGLFYCK. The cysteines at positions 105 and 180 are disulfide-linked. The helical transmembrane segment at 107 to 128 threads the bilayer; sequence FHNFFPIAAVFASIYSMTAVAF. Over 129–148 the chain is Cytoplasmic; the sequence is DRYMAIIHPLQPRLSATATK. A helical transmembrane segment spans residues 149-169; that stretch reads VVICVIWVLALLLAFPQGYYS. Residues 170–194 lie on the Extracellular side of the membrane; it reads TTETMPGRVVCMIEWPSHPDKIYEK. The chain crosses the membrane as a helical span at residues 195 to 219; that stretch reads VYHICVTVLIYFLPLLVIGYAYTVV. Topologically, residues 220–248 are cytoplasmic; it reads GITLWASEIPGDSSDRYHEQVSAKRKVVK. The chain crosses the membrane as a helical span at residues 249-270; sequence MMIVVVCTFAICWLPFHIFFLL. The Extracellular portion of the chain corresponds to 271 to 283; that stretch reads PYINPDLYLKKFI. A helical membrane pass occupies residues 284-308; that stretch reads QQVYLAIMWLAMSSTMYNPIIYCCL. Residues 309-407 are Cytoplasmic-facing; it reads NDRFRLGFKH…SSSFYSNMLS (99 aa). Residue Cys322 is the site of S-palmitoyl cysteine attachment. The interval 363-407 is disordered; it reads GAHEEDPEEGPKATPSSLDLTSNGSSRSNSKTVTESSSFYSNMLS. Residues 376–407 are compositionally biased toward polar residues; it reads TPSSLDLTSNGSSRSNSKTVTESSSFYSNMLS.

This sequence belongs to the G-protein coupled receptor 1 family. Interacts with ARRB1.

Its subcellular location is the cell membrane. Functionally, this is a receptor for the tachykinin neuropeptide substance P. It is probably associated with G proteins that activate a phosphatidylinositol-calcium second messenger system. The rank order of affinity of this receptor to tachykinins is: substance P &gt; substance K &gt; neuromedin-K. The protein is Substance-P receptor (TACR1) of Cavia porcellus (Guinea pig).